Here is a 740-residue protein sequence, read N- to C-terminus: Inhibitor of nuclear factor kappa-B kinase subunit alpha (740 aa).

Positions 15 to 302 constitute a Protein kinase domain; sequence WEMRERLGTG…LTLKQPRCFV (288 aa). Residues 21–29 and K44 each bind ATP; that span reads LGTGGFGNV. T23 is modified (phosphothreonine; by PKB/AKT1). The Proton acceptor role is filled by D144. S176 is modified (phosphoserine; by MAP3K14). S180 bears the Phosphoserine mark. A leucine-zipper region spans residues 455-476; sequence LLRYNTNLTKMKNTLISASQQL. The segment at 733 to 738 is NEMO-binding; the sequence is LDWSWL.

Belongs to the protein kinase superfamily. Ser/Thr protein kinase family. I-kappa-B kinase subfamily. In terms of assembly, component of the I-kappa-B-kinase (IKK) core complex consisting of CHUK, IKBKB and IKBKG; probably four alpha/CHUK-beta/IKBKB dimers are associated with four gamma/IKBKG subunits. The IKK core complex seems to associate with regulatory or adapter proteins to form a IKK-signalosome holo-complex. The IKK complex associates with TERF2IP/RAP1, leading to promote IKK-mediated phosphorylation of RELA/p65. Part of a complex composed of NCOA2, NCOA3, CHUK/IKKA, IKBKB, IKBKG and CREBBP. Part of a 70-90 kDa complex at least consisting of CHUK/IKKA, IKBKB, NFKBIA, RELA, ELP1 and MAP3K14. Directly interacts with TRPC4AP. May interact with TRAF2. Interacts with NALP2. May interact with MAVS/IPS1. Interacts with ARRB1 and ARRB2. Interacts with NLRC5; prevents CHUK phosphorylation and kinase activity. Interacts with PIAS1; this interaction induces PIAS1 phosphorylation. Interacts with ZNF268 isoform 2; the interaction is further increased in a TNF-alpha-dependent manner. Interacts with IFIT5; the interaction synergizes the recruitment of IKK to MAP3K7 and enhances IKK phosphorylation. Interacts with LRRC14. Directly interacts with DDX3X after the physiological activation of the TLR7 and TLR8 pathways; this interaction enhances CHUK autophosphorylation. In terms of processing, ubiquitinated by TRIM56 via 'Lys-63'-linked ubiquitination, promoting activation of CHUK/IKKA. Phosphorylated by MAP3K14/NIK, AKT and to a lesser extent by MEKK1, and dephosphorylated by PP2A. Autophosphorylated.

Its subcellular location is the cytoplasm. The protein resides in the nucleus. It catalyses the reaction L-seryl-[I-kappa-B protein] + ATP = O-phospho-L-seryl-[I-kappa-B protein] + ADP + H(+). With respect to regulation, activated when phosphorylated and inactivated when dephosphorylated. In terms of biological role, serine kinase that plays an essential role in the NF-kappa-B signaling pathway which is activated by multiple stimuli such as inflammatory cytokines, bacterial or viral products, DNA damages or other cellular stresses. Acts as a part of the canonical IKK complex in the conventional pathway of NF-kappa-B activation and phosphorylates inhibitors of NF-kappa-B on serine residues. These modifications allow polyubiquitination of the inhibitors and subsequent degradation by the proteasome. In turn, free NF-kappa-B is translocated into the nucleus and activates the transcription of hundreds of genes involved in immune response, growth control, or protection against apoptosis. Negatively regulates the pathway by phosphorylating the scaffold protein TAXBP1 and thus promoting the assembly of the A20/TNFAIP3 ubiquitin-editing complex (composed of A20/TNFAIP3, TAX1BP1, and the E3 ligases ITCH and RNF11). Therefore, CHUK plays a key role in the negative feedback of NF-kappa-B canonical signaling to limit inflammatory gene activation. As part of the non-canonical pathway of NF-kappa-B activation, the MAP3K14-activated CHUK/IKKA homodimer phosphorylates NFKB2/p100 associated with RelB, inducing its proteolytic processing to NFKB2/p52 and the formation of NF-kappa-B RelB-p52 complexes. In turn, these complexes regulate genes encoding molecules involved in B-cell survival and lymphoid organogenesis. Also participates in the negative feedback of the non-canonical NF-kappa-B signaling pathway by phosphorylating and destabilizing MAP3K14/NIK. Within the nucleus, phosphorylates CREBBP and consequently increases both its transcriptional and histone acetyltransferase activities. Modulates chromatin accessibility at NF-kappa-B-responsive promoters by phosphorylating histones H3 at 'Ser-10' that are subsequently acetylated at 'Lys-14' by CREBBP. Additionally, phosphorylates the CREBBP-interacting protein NCOA3. Also phosphorylates FOXO3 and may regulate this pro-apoptotic transcription factor. Interacts with SASH1. Phosphorylates RIPK1 at 'Ser-25' which represses its kinase activity and consequently prevents TNF-mediated RIPK1-dependent cell death. Phosphorylates AMBRA1 following mitophagy induction, promoting AMBRA1 interaction with ATG8 family proteins and its mitophagic activity. This Bos taurus (Bovine) protein is Inhibitor of nuclear factor kappa-B kinase subunit alpha (CHUK).